The sequence spans 332 residues: Fructose-1,6-bisphosphatase class 1 (332 aa).

Mg(2+)-binding residues include Glu-89, Asp-110, Leu-112, and Asp-113. Residues 113–116 (DGSS), Asn-206, Tyr-239, 257–259 (YLY), and Lys-269 contribute to the substrate site. Mg(2+) is bound at residue Glu-275.

Belongs to the FBPase class 1 family. As to quaternary structure, homotetramer. It depends on Mg(2+) as a cofactor.

The protein localises to the cytoplasm. The catalysed reaction is beta-D-fructose 1,6-bisphosphate + H2O = beta-D-fructose 6-phosphate + phosphate. It functions in the pathway carbohydrate biosynthesis; gluconeogenesis. The chain is Fructose-1,6-bisphosphatase class 1 from Escherichia coli O157:H7.